Reading from the N-terminus, the 419-residue chain is MDKFRVQGPTTLQGEVTISGAKNAALPILFAALLAEEPVEIQNVPKLKDIDTTMKLLSQLGTKVERNGSVWIDASQVNIFCAPYELVKTMRASIWALGPLVARFGQGQVSLPGGCAIGARPVDLHITGLEQLGAEIKLEEGYVKASVNGRLKGAHIVMDKVSVGATVTIMSAATLAEGTTVIENAAREPEIVDTANFLVTLGAKISGQGTDRITIEGVERLGGGVYRVLPDRIETGTFLVAAAISGGKIVCRNAQPDTLDAVLAKLRDAGADIETGEDWISLDMHGQRPKAVNVRTAPHPAFPTDMQAQFTLLNLVAEGTGFITETIFENRFMHVPELIRMGAHAEIESNTVICHGVEKLSGAQVMATDLRASASLVLAGCIAEGTTLVDRIYHIDRGYERIEDKLRALGANIERVKGE.

Residue 22–23 participates in phosphoenolpyruvate binding; it reads KN. A UDP-N-acetyl-alpha-D-glucosamine-binding site is contributed by R91. Catalysis depends on C115, which acts as the Proton donor. The residue at position 115 (C115) is a 2-(S-cysteinyl)pyruvic acid O-phosphothioketal. Residues 120–124, 160–163, D305, and I327 each bind UDP-N-acetyl-alpha-D-glucosamine; these read RPVDL and KVSV.

The protein belongs to the EPSP synthase family. MurA subfamily.

Its subcellular location is the cytoplasm. The catalysed reaction is phosphoenolpyruvate + UDP-N-acetyl-alpha-D-glucosamine = UDP-N-acetyl-3-O-(1-carboxyvinyl)-alpha-D-glucosamine + phosphate. It participates in cell wall biogenesis; peptidoglycan biosynthesis. Cell wall formation. Adds enolpyruvyl to UDP-N-acetylglucosamine. In Citrobacter koseri (strain ATCC BAA-895 / CDC 4225-83 / SGSC4696), this protein is UDP-N-acetylglucosamine 1-carboxyvinyltransferase.